The chain runs to 577 residues: Sulfite reductase [NADPH] hemoprotein beta-component (577 aa).

Cys-441, Cys-447, Cys-486, and Cys-490 together coordinate [4Fe-4S] cluster. Cys-490 contributes to the siroheme binding site.

Belongs to the nitrite and sulfite reductase 4Fe-4S domain family. Alpha(8)-beta(8). The alpha component is a flavoprotein, the beta component is a hemoprotein. The cofactor is siroheme. [4Fe-4S] cluster is required as a cofactor.

The enzyme catalyses hydrogen sulfide + 3 NADP(+) + 3 H2O = sulfite + 3 NADPH + 4 H(+). Its pathway is sulfur metabolism; hydrogen sulfide biosynthesis; hydrogen sulfide from sulfite (NADPH route): step 1/1. In terms of biological role, component of the sulfite reductase complex that catalyzes the 6-electron reduction of sulfite to sulfide. This is one of several activities required for the biosynthesis of L-cysteine from sulfate. The chain is Sulfite reductase [NADPH] hemoprotein beta-component from Pectobacterium atrosepticum (strain SCRI 1043 / ATCC BAA-672) (Erwinia carotovora subsp. atroseptica).